The primary structure comprises 164 residues: S-ribosylhomocysteine lyase (164 aa).

Fe cation-binding residues include His54, His58, and Cys128.

The protein belongs to the LuxS family. Homodimer. It depends on Fe cation as a cofactor.

The catalysed reaction is S-(5-deoxy-D-ribos-5-yl)-L-homocysteine = (S)-4,5-dihydroxypentane-2,3-dione + L-homocysteine. Involved in the synthesis of autoinducer 2 (AI-2) which is secreted by bacteria and is used to communicate both the cell density and the metabolic potential of the environment. The regulation of gene expression in response to changes in cell density is called quorum sensing. Catalyzes the transformation of S-ribosylhomocysteine (RHC) to homocysteine (HC) and 4,5-dihydroxy-2,3-pentadione (DPD). The sequence is that of S-ribosylhomocysteine lyase from Campylobacter jejuni subsp. jejuni serotype O:2 (strain ATCC 700819 / NCTC 11168).